The primary structure comprises 337 residues: tRNA dimethylallyltransferase (337 aa).

G24–T31 serves as a coordination point for ATP. T26–T31 contributes to the substrate binding site. Interaction with substrate tRNA stretches follow at residues D49–Q52 and Q188–R192.

Belongs to the IPP transferase family. As to quaternary structure, monomer. The cofactor is Mg(2+).

It carries out the reaction adenosine(37) in tRNA + dimethylallyl diphosphate = N(6)-dimethylallyladenosine(37) in tRNA + diphosphate. Its function is as follows. Catalyzes the transfer of a dimethylallyl group onto the adenine at position 37 in tRNAs that read codons beginning with uridine, leading to the formation of N6-(dimethylallyl)adenosine (i(6)A). This chain is tRNA dimethylallyltransferase, found in Nitratidesulfovibrio vulgaris (strain DSM 19637 / Miyazaki F) (Desulfovibrio vulgaris).